A 745-amino-acid chain; its full sequence is Cullin-2 (745 aa).

K393 carries the N6-acetyllysine modification. A Phosphothreonine modification is found at T661. One can recognise a Cullin neddylation domain in the interval 675–735 (DRKMYLQAAI…IDKQYIERSQ (61 aa)). Residue K689 forms a Glycyl lysine isopeptide (Lys-Gly) (interchain with G-Cter in NEDD8) linkage.

Belongs to the cullin family. In terms of assembly, component of multiple Cul2-RING (CRL2) E3 ubiquitin-protein ligase complexes consisting of CUL2, Elongin BC (ELOB and ELOC), RBX1 and a variable substrate-specific adapter; this complex is also known as ECS (Elongin BC-CUL2/5-SOCS-box protein) complex and may consist of CUL2 or CUL5. Component of the ECS(VHL) or CBC(VHL) complex containing CUL2, RBX1, ELOB, ELOC and VHL. Component of the ECS(MED8) complex with the probable substrate recognition component MED8. Component of multiple ECS complexes part of the DesCEND (destruction via C-end degrons) pathway, which contain either KLHDC2, KLHDC3, KLHDC10, APPBP2, FEM1A, FEM1B or FEM1C as substrate-recognition component. Component of the ECS(LRR1) complex with the substrate recognition component LRR1. Component of a CRL2(FEM1B) complex containing CUL2, RBX1, ELOB, ELOC and FEM1B. Component of a CRL2(FEM1C) complex containing CUL2, RBX1, ELOB, ELOC and FEM1C. Part of an E3 ubiquitin-protein ligase complex including ZYG11B, CUL2 and Elongin BC. Part of an E3 ubiquitin-protein ligase complex including ZER1, CUL2 and Elongin BC. Interacts with RBX1, RNF7, FEM1B and TIP120A/CAND1. Found in a complex composed of LIMD1, VHL, EGLN1/PHD2, ELOB and CUL2. Interacts (when neddylated) with ARIH1; leading to activate the E3 ligase activity of ARIH1. Interacts (unneddylated form) with DCUN1D1, DCUN1D2, DCUN1D3, DCUN1D4 and DCUN1D5; these interactions promote the cullin neddylation. Component of VCB (elongins BC/CUL2/VHL) complex that contains at least DCUN1D1, CUL2 and VHL; this complex triggers CUL2 neddylation and consequently cullin ring ligase (CRL) substrates polyubiquitylation. In terms of processing, neddylated; which enhances the ubiquitination activity of ECS (Elongin BC-CUL2/5-SOCS-box protein) E3 ubiquitin-protein ligase complexes. Neddylation leads to structural rearrangment in the complex that allows interaction between the E2 ubiquitin-conjugating enzyme and the acceptor ubiquitin. CBC(VHL) complex formation seems to promote neddylation. Deneddylated via its interaction with the COP9 signalosome (CSN) complex.

Its subcellular location is the nucleus. Its pathway is protein modification; protein ubiquitination. Its function is as follows. Core component of multiple cullin-RING-based ECS (ElonginB/C-CUL2/5-SOCS-box protein) E3 ubiquitin-protein ligase complexes, which mediate the ubiquitination of target proteins. CUL2 may serve as a rigid scaffold in the complex and may contribute to catalysis through positioning of the substrate and the ubiquitin-conjugating enzyme. The E3 ubiquitin-protein ligase activity of the complex is dependent on the neddylation of the cullin subunit and is inhibited by the association of the deneddylated cullin subunit with TIP120A/CAND1. The functional specificity of the ECS complex depends on the substrate recognition component. ECS(VHL) mediates the ubiquitination of hypoxia-inducible factor (HIF). A number of ECS complexes (containing either KLHDC2, KLHDC3, KLHDC10, APPBP2, FEM1A, FEM1B or FEM1C as substrate-recognition component) are part of the DesCEND (destruction via C-end degrons) pathway, which recognizes a C-degron located at the extreme C terminus of target proteins, leading to their ubiquitination and degradation. ECS complexes and ARIH1 collaborate in tandem to mediate ubiquitination of target proteins. ECS(LRR1) ubiquitinates MCM7 and promotes CMG replisome disassembly by VCP and chromatin extraction during S-phase. This chain is Cullin-2 (CUL2), found in Pongo abelii (Sumatran orangutan).